The primary structure comprises 876 residues: MARSGSCPHLLWDVRKRSLGLEDPSRLRSRYLGRREFIQRLKLEATLNVHDGCVNTICWNDTGEYILSGSDDTKLVISNPYSRKVLTTIRSGHRANIFSAKFLPCTDDKQIVSCSGDGVIFYTNIEQDAETNRQCQFTCHYGTTYEIMTVPNDPYTFLSCGEDGTVRWFDTRIKTSCTKEDCKDDILINCRRAATSVAICPPVPYYLAVGCSDSSVRIYDRRMLGTRATGNYAGRGTTGMVARFIPSHLSNKSCRVTSLCYSEDGQEILVSYSSDYIYLFDPKDDTARELKTPSAEERREELRQPPVKRLRLRGDWSDTGPRARPESERERDGEQSPNVSLMQRMSDMLSRWFEEASEVAQSNRGRGRPRPRGGTNQPDVSTLPTVPSSPNLEVCETAMDVDMPAALLQPSTSSTDPVQAQAATAAIESPRSSSLLSCPDSEPRQSVEASGHHAHHQSDNSNERLSPKPGTGEPVLSLHYSTEGTTTSTIKLNFTDEWSSTASSSRGNGSHCKSEGQEECLVPPSSVQPPEGDSETRAPEELSEKGTLPENLTQNQIDTAQLDNFPAEPLDSNSGEKNNPSQDSPCGLPEEGTLSETDRETCEQASTESATRHASTKPELPSQTEAIEQASTESATRHTSANPELPSQTEAIAPLAHEDPSARDSALQDTDDSDDDPVLIPGARYRTGPGDRRSAVARIQEFFRRRKERKEMEELDTLNIRRPLVKMVYKGHRNSRTMIKEANFWGANFVMSGSDCGHIFIWDRHTAEHLMLLEADNHVVNCLQPHPFDPILASSGIDYDIKIWSPLEESRIFNRKLADEVITRNELMLEETRNTITVPASFMLRMLASLNHIRADRLEGDRSEGSGQENENEDEE.

WD repeat units follow at residues 49–88 (VHDG…VLTT), 92–133 (GHRA…ETNR), 139–179 (CHYG…SCTK), 189–229 (NCRR…TRAT), and 251–290 (NKSC…AREL). Basic and acidic residues-rich tracts occupy residues 288–303 (RELK…EELR) and 312–334 (LRGD…RDGE). Disordered regions lie at residues 288–340 (RELK…PNVS), 355–391 (EASE…SSPN), 408–485 (LQPS…TEGT), 498–645 (WSST…NPEL), and 658–691 (EDPS…GPGD). Residue Ser-336 is modified to Phosphoserine. 2 stretches are compositionally biased toward polar residues: residues 375–391 (TNQP…SSPN) and 409–422 (QPST…QAQA). Residues 456–466 (HQSDNSNERLS) show a composition bias toward basic and acidic residues. Residues 499–510 (SSTASSSRGNGS) are compositionally biased toward low complexity. The span at 534 to 544 (SETRAPEELSE) shows a compositional bias: basic and acidic residues. Composition is skewed to polar residues over residues 550–562 (ENLT…TAQL), 571–584 (DSNS…SQDS), 603–613 (EQASTESATRH), and 621–645 (PSQT…NPEL). Ser-665 is modified (phosphoserine). Thr-670 is modified (phosphothreonine). Ser-673 bears the Phosphoserine mark. An IQ domain is found at 692–721 (RRSAVARIQEFFRRRKERKEMEELDTLNIR). WD repeat units lie at residues 734-772 (NSRT…HLML) and 775-814 (ADNH…RIFN). Ser-863 and Ser-866 each carry phosphoserine.

Interacts with the nuclear receptors NR3C1 and AR in the presence of ligand. Interacts with DDB1, CUL4A and CUL4B.

It is found in the nucleus. It functions in the pathway protein modification; protein ubiquitination. In terms of biological role, ligand-dependent coactivator of nuclear receptors. Enhance transcriptional activity of the nuclear receptors NR3C1 and AR. May function as a substrate receptor for CUL4-DDB1 E3 ubiquitin-protein ligase complex. This chain is DDB1- and CUL4-associated factor 6 (Dcaf6), found in Mus musculus (Mouse).